Reading from the N-terminus, the 92-residue chain is Small ribosomal subunit protein bS20 (92 aa).

The tract at residues 1 to 28 (MANTASAEKRNRQAQKRRARNVQVRTGV) is disordered.

This sequence belongs to the bacterial ribosomal protein bS20 family.

Its function is as follows. Binds directly to 16S ribosomal RNA. This is Small ribosomal subunit protein bS20 from Anaeromyxobacter dehalogenans (strain 2CP-C).